Here is a 501-residue protein sequence, read N- to C-terminus: Cystine/glutamate transporter (501 aa).

Residues 1–43 (MVRKPVVSTISKGGYLQGNVNGRLPSLGNKEPPGQEKVQLKRK) lie on the Cytoplasmic side of the membrane. The residue at position 26 (serine 26) is a Phosphoserine. A helical membrane pass occupies residues 44–64 (VTLLRGVSIIIGTIIGAGIFI). At 65–74 (SPKGVLQNTG) the chain is on the extracellular side. A helical transmembrane segment spans residues 75-95 (SVGMSLTIWTVCGVLSLFGAL). Residues 96 to 101 (SYAELG) are Cytoplasmic-facing. The stretch at 102-116 (TTIKKSGGHYTYILE) is an intramembrane region. Residues 117–130 (VFGPLPAFVRVWVE) lie on the Cytoplasmic side of the membrane. The chain crosses the membrane as a helical span at residues 131 to 150 (LLIIRPAATAVISLAFGRYI). Arginine 135 is an L-glutamate binding site. The Extracellular segment spans residues 151-163 (LEPFFIQCEIPEL). A helical transmembrane segment spans residues 164–179 (AIKLITAVGITVVMVL). The Cytoplasmic portion of the chain corresponds to 180–193 (NSMSVSWSARIQIF). The chain crosses the membrane as a helical span at residues 194–210 (LTFCKLTAILIIIVPGV). The Extracellular segment spans residues 211 to 234 (MQLIKGQTQNFKDAFSGRDSSITR). The chain crosses the membrane as a helical span at residues 235-255 (LPLAFYYGMYAYAGWFYLNFV). Tyrosine 244 contributes to the L-glutamate binding site. At 256 to 265 (TEEVENPEKT) the chain is on the cytoplasmic side. Residues 266–286 (IPLAICISMAIVTIGYVLTNV) traverse the membrane as a helical segment. Residues 287-317 (AYFTTINAEELLLSNAVAVTFSERLLGNFSL) lie on the Extracellular side of the membrane. Asparagine 314 carries an N-linked (GlcNAc...) asparagine glycan. The helical transmembrane segment at 318–338 (AVPIFVALSCFGSMNGGVFAV) threads the bilayer. The Cytoplasmic portion of the chain corresponds to 339-364 (SRLFYVASREGHLPEILSMIHVRKHT). A helical membrane pass occupies residues 365–385 (PLPAVIVLHPLTMIMLFSGDL). The Extracellular portion of the chain corresponds to 386–387 (DS). The chain crosses the membrane as a helical span at residues 388 to 408 (LLNFLSFARWLFIGLAVAGLI). The Cytoplasmic portion of the chain corresponds to 409 to 422 (YLRYKCPDMHRPFK). The helical transmembrane segment at 423–443 (VPLFIPALFSFTCLFMVALSL) threads the bilayer. The Extracellular portion of the chain corresponds to 444–449 (YSDPFS). The helical transmembrane segment at 450–470 (TGIGSVITLTGVPAYYLFIIW) threads the bilayer. Topologically, residues 471–501 (DKKPRWFRIMSEKITRTLQIILEVVPEEDKL) are cytoplasmic.

It belongs to the amino acid-polyamine-organocation (APC) superfamily. L-type amino acid transporter (LAT) (TC 2.A.3.8) family. As to quaternary structure, disulfide-linked heterodimer with the amino acid transport protein SLC3A2/4F2hc; this interaction mediates cell membrane localization.

The protein localises to the cell membrane. It is found in the cell projection. Its subcellular location is the microvillus membrane. The enzyme catalyses L-cystine(out) + L-glutamate(in) = L-cystine(in) + L-glutamate(out). It carries out the reaction an L-alpha-amino acid(in) + L-kynurenine(out) = an L-alpha-amino acid(out) + L-kynurenine(in). It catalyses the reaction N-acetyl-L-cysteine(out) + L-glutamate(in) = N-acetyl-L-cysteine(in) + L-glutamate(out). In terms of biological role, heterodimer with SLC3A2, that functions as an antiporter by mediating the exchange of extracellular anionic L-cystine and intracellular L-glutamate across the cellular plasma membrane. Provides L-cystine for the maintenance of the redox balance between extracellular L-cystine and L-cysteine and for the maintenance of the intracellular levels of glutathione that is essential for cells protection from oxidative stress. The transport is sodium-independent, electroneutral with a stoichiometry of 1:1, and is drove by the high intracellular concentration of L-glutamate and the intracellular reduction of L-cystine. In addition, mediates the import of L-kynurenine leading to anti-ferroptotic signaling propagation required to maintain L-cystine and glutathione homeostasis. Moreover, mediates N-acetyl-L-cysteine uptake into the placenta leading to subsequently down-regulation of pathways associated with oxidative stress, inflammation and apoptosis. In vitro can also transport L-aspartate. May participate in astrocyte and meningeal cell proliferation during development and can provide neuroprotection by promoting glutathione synthesis and delivery from non-neuronal cells such as astrocytes and meningeal cells to immature neurons. Controls the production of pheomelanin pigment directly. The sequence is that of Cystine/glutamate transporter from Pongo abelii (Sumatran orangutan).